A 340-amino-acid polypeptide reads, in one-letter code: Gallate dioxygenase (340 aa).

His45 functions as the Proton donor in the catalytic mechanism. The Proton acceptor role is filled by His113.

This sequence belongs to the LigB/MhpB extradiol dioxygenase family. Fe(2+) serves as cofactor.

The enzyme catalyses 3,4,5-trihydroxybenzoate + O2 = (1E)-4-oxobut-1-ene-1,2,4-tricarboxylate + 2 H(+). In terms of biological role, ring-cleavage dioxygenase that acts specifically on gallate to produce the keto-tautomer of 4-oxalomesaconate. Mediates the first step of gallate degradation pathway. The protein is Gallate dioxygenase (galA) of Pseudomonas putida (strain ATCC 47054 / DSM 6125 / CFBP 8728 / NCIMB 11950 / KT2440).